The following is a 396-amino-acid chain: uncharacterized protein (396 aa).

A run of 12 helical transmembrane segments spans residues 12 to 32 (LLAL…SVGL), 48 to 68 (GLTV…LTSL), 78 to 98 (LLWI…ASSI), 106 to 126 (VISA…AADI), 138 to 158 (IMFT…TFIG), 165 to 185 (FAFM…GILV), 209 to 229 (LLLL…VFTY), 242 to 262 (AGTV…GNMI), 271 to 291 (PIAA…VLTF), 297 to 317 (AAGL…VPGL), 338 to 358 (AMNI…GGVI), and 362 to 382 (IGLI…VILT).

The protein belongs to the major facilitator superfamily.

Its subcellular location is the cell membrane. This is an uncharacterized protein from Bacillus subtilis (strain 168).